The sequence spans 389 residues: Chaperone protein DnaJ (389 aa).

A J domain is found at 6 to 70 (DYYEVLGLAK…QKKAAYDQYG (65 aa)). Residues 142–224 (GVEKEIKYNR…CHGTGHEKKA (83 aa)) form a CR-type zinc finger. Positions 155, 158, 172, 175, 198, 201, 212, and 215 each coordinate Zn(2+). CXXCXGXG motif repeat units lie at residues 155–162 (CATCGGNG), 172–179 (CHKCHGSG), 198–205 (CDVCHGTG), and 212–219 (CPTCHGTG).

Belongs to the DnaJ family. Homodimer. It depends on Zn(2+) as a cofactor.

It localises to the cytoplasm. Its function is as follows. Participates actively in the response to hyperosmotic and heat shock by preventing the aggregation of stress-denatured proteins and by disaggregating proteins, also in an autonomous, DnaK-independent fashion. Unfolded proteins bind initially to DnaJ; upon interaction with the DnaJ-bound protein, DnaK hydrolyzes its bound ATP, resulting in the formation of a stable complex. GrpE releases ADP from DnaK; ATP binding to DnaK triggers the release of the substrate protein, thus completing the reaction cycle. Several rounds of ATP-dependent interactions between DnaJ, DnaK and GrpE are required for fully efficient folding. Also involved, together with DnaK and GrpE, in the DNA replication of plasmids through activation of initiation proteins. The chain is Chaperone protein DnaJ from Enterococcus faecalis (strain ATCC 700802 / V583).